The primary structure comprises 149 residues: Transcriptional regulator MraZ (149 aa).

2 SpoVT-AbrB domains span residues Arg6 to Asp52 and Val81 to Glu124.

It belongs to the MraZ family. Forms oligomers.

Its subcellular location is the cytoplasm. The protein resides in the nucleoid. This Oleidesulfovibrio alaskensis (strain ATCC BAA-1058 / DSM 17464 / G20) (Desulfovibrio alaskensis) protein is Transcriptional regulator MraZ.